We begin with the raw amino-acid sequence, 233 residues long: Orotidine 5'-phosphate decarboxylase (233 aa).

Substrate is bound by residues Asp-13, Lys-35, 62–71 (DLKFHDIPNT), Thr-122, Arg-182, Gln-191, Gly-211, and Arg-212. Catalysis depends on Lys-64, which acts as the Proton donor.

It belongs to the OMP decarboxylase family. Type 1 subfamily. Homodimer.

The catalysed reaction is orotidine 5'-phosphate + H(+) = UMP + CO2. It functions in the pathway pyrimidine metabolism; UMP biosynthesis via de novo pathway; UMP from orotate: step 2/2. In terms of biological role, catalyzes the decarboxylation of orotidine 5'-monophosphate (OMP) to uridine 5'-monophosphate (UMP). This chain is Orotidine 5'-phosphate decarboxylase, found in Pseudomonas putida (strain W619).